Consider the following 407-residue polypeptide: uncharacterized protein (407 aa).

A Glycyl lysine isopeptide (Lys-Gly) (interchain with G-Cter in ubiquitin) cross-link involves residue Lys-22.

The protein belongs to the SVF1 family.

It is found in the cytoplasm. This is an uncharacterized protein from Saccharomyces cerevisiae (strain ATCC 204508 / S288c) (Baker's yeast).